We begin with the raw amino-acid sequence, 215 residues long: CASP-like protein 1E1 (215 aa).

Residues 1-51 are Cytoplasmic-facing; that stretch reads MESSRGKPGLNGSGGGAAAFDYSSRRGYYTGAGAALPPLAAGSRAPPVDPC. A helical transmembrane segment spans residues 52-72; sequence CVVLRVFVLLGTLASAVVMAA. At 73 to 103 the chain is on the extracellular side; it reads DRQSTTVQIAAGEELAPPLRVPVTAKWTYSS. Residues 104-124 traverse the membrane as a helical segment; the sequence is AFVYFVVANAMVFAFSAAALA. Residues 125-130 lie on the Cytoplasmic side of the membrane; it reads AVRRRS. Residues 131-151 form a helical membrane-spanning segment; that stretch reads AVVPVMVGDLVAMALLFSAVG. The Extracellular segment spans residues 152–185; sequence AAAQFGLLGERGNAHVRWAKVCDVYGPFCERAMA. Residues 186 to 206 traverse the membrane as a helical segment; sequence AVVVALIAAFADLVLLMLTIL. Residues 207–215 lie on the Cytoplasmic side of the membrane; the sequence is TIHKASSYY.

The protein belongs to the Casparian strip membrane proteins (CASP) family. Homodimer and heterodimers.

Its subcellular location is the cell membrane. In Oryza sativa subsp. japonica (Rice), this protein is CASP-like protein 1E1.